The primary structure comprises 449 residues: XK-related protein 2 (449 aa).

Transmembrane regions (helical) follow at residues 35-55 (FSIL…LYMV), 68-88 (TYTF…LIFV), 98-118 (LSLF…EAMI), 174-194 (IQAF…SLIS), 202-222 (VVLM…CNML), 241-261 (LCIT…LVLF), 269-289 (AVPF…IKFW), 306-326 (VGTL…NFSC), 357-377 (LVEN…VLLN), and 382-402 (LIAL…LLFF).

It belongs to the XK family. Expressed predominantly in the placenta, in syncytiotrophoblasts. Moderate levels in the adrenal gland, low levels in the trachea and very low levels in the bone marrow.

The protein localises to the cell membrane. The protein is XK-related protein 2 (XKRX) of Homo sapiens (Human).